The chain runs to 252 residues: 5-oxoprolinase subunit A (252 aa).

It belongs to the LamB/PxpA family. As to quaternary structure, forms a complex composed of PxpA, PxpB and PxpC.

It catalyses the reaction 5-oxo-L-proline + ATP + 2 H2O = L-glutamate + ADP + phosphate + H(+). Functionally, catalyzes the cleavage of 5-oxoproline to form L-glutamate coupled to the hydrolysis of ATP to ADP and inorganic phosphate. This Mycobacterium avium (strain 104) protein is 5-oxoprolinase subunit A.